Reading from the N-terminus, the 414-residue chain is tRNA dimethylallyltransferase (414 aa).

33-40 serves as a coordination point for ATP; it reads APTASGKT. 35-40 contacts substrate; that stretch reads TASGKT. Interaction with substrate tRNA regions lie at residues 58-61, 182-186, and 266-271; these read DSAL, QRITR, and RCVGYR.

The protein belongs to the IPP transferase family. Monomer. Mg(2+) is required as a cofactor.

It carries out the reaction adenosine(37) in tRNA + dimethylallyl diphosphate = N(6)-dimethylallyladenosine(37) in tRNA + diphosphate. Its function is as follows. Catalyzes the transfer of a dimethylallyl group onto the adenine at position 37 in tRNAs that read codons beginning with uridine, leading to the formation of N6-(dimethylallyl)adenosine (i(6)A). This chain is tRNA dimethylallyltransferase, found in Psychrobacter arcticus (strain DSM 17307 / VKM B-2377 / 273-4).